We begin with the raw amino-acid sequence, 475 residues long: UDP-glycosyltransferase 1 (475 aa).

The Proton acceptor role is filled by histidine 15. Residue histidine 15 participates in an anthocyanidin binding. The active-site Charge relay is aspartate 117. The UDP-alpha-D-glucose site is built by alanine 345, glutamine 347, histidine 362, tryptophan 365, asparagine 366, serine 367, and glutamate 370. Glycine 385 provides a ligand contact to an anthocyanidin. Glutamate 386 and glutamine 387 together coordinate UDP-alpha-D-glucose.

It belongs to the UDP-glycosyltransferase family. In terms of tissue distribution, mostly expressed in leaves and flowers, and, to a lower extent, in roots and stems.

The catalysed reaction is (20S)-protopanaxadiol + UDP-alpha-D-glucose = (20S)-ginsenoside C-K + UDP + H(+). The enzyme catalyses (20S)-ginsenoside Rg3 + UDP-alpha-D-glucose = (20S)-ginsenoside Rd + UDP + H(+). It carries out the reaction (20S)-ginsenoside Rh2 + UDP-alpha-D-glucose = (20S)-ginsenoside F2 + UDP + H(+). It catalyses the reaction (20S)-protopanaxatriol + UDP-alpha-D-glucose = (20S)-ginsenoside F1 + UDP + H(+). The catalysed reaction is dammarenediol-II + UDP-alpha-D-glucose = (20S)-20-O-(beta-D-glucosyl)-3-hydroxydammarene + UDP + H(+). The protein operates within secondary metabolite biosynthesis; terpenoid biosynthesis. Functionally, component of the dammarane-type triterpene saponins (e.g. ginsenosides or panaxosides) biosynthetic pathway. Glycosyltransferase that catalyzes the biosynthesis of ginsenoside F1 from protopanaxatriol (PPT). Triggers C20-OH glycosylation of ginsenoside Rg3 to produce ginsenoside Rd. Mediates the conversion of protopanaxadiol (PPD) to the ginsenoside compound K. catalyzes the production of 20S-O-beta-(D-glucosyl)-dammarenediol II form dammarenediol II (DM). The protein is UDP-glycosyltransferase 1 of Panax ginseng (Korean ginseng).